The following is a 538-amino-acid chain: Furcatin hydrolase (538 aa).

A chloroplast-targeting transit peptide spans 1 to 66; that stretch reads MATITTLASS…NFNKDNWLAS (66 aa). The tract at residues 18 to 37 is disordered; the sequence is SFPGGSSRKPKKDNLSIKPP. A beta-D-glucoside-binding positions include Gln-88, His-192, and 237-238; that span reads NE. Catalysis depends on Glu-238, which acts as the Proton donor. A disulfide bridge connects residues Cys-257 and Cys-260. A beta-D-glucoside-binding positions include Tyr-376, Glu-447, Trp-494, 501–502, and Phe-510; that span reads EW. The active-site Nucleophile is the Glu-447.

It belongs to the glycosyl hydrolase 1 family. Expressed in young and mature leaves, but not in fruit and stem.

It localises to the plastid. Its subcellular location is the chloroplast. It carries out the reaction 7-[beta-D-apiofuranosyl-(1-&gt;6)-beta-D-glucopyranosyloxy]isoflavonoid + H2O = a 7-hydroxyisoflavonoid + beta-D-apiofuranosyl-(1-&gt;6)-D-glucose.. In terms of biological role, disaccharide-specific acuminosidase, hydrolyzes the beta-glycosidic bond between p-allylphenol and acuminose with retention of anomeric configuration. Has highest activity towards furcatin, and lower activity towards beta-primeverosides and beta-vicianoside. Has very low activity towards beta-gentobiosides. The chain is Furcatin hydrolase from Viburnum furcatum (Scarlet leaved viburnum).